Reading from the N-terminus, the 159-residue chain is Phosphopantetheine adenylyltransferase (159 aa).

Thr9 is a substrate binding site. ATP contacts are provided by residues 9-10 (TF) and His17. Substrate contacts are provided by Lys41, Leu73, and Arg87. ATP-binding positions include 88-90 (GLR), Glu98, and 123-129 (YSFISST).

The protein belongs to the bacterial CoaD family. In terms of assembly, homohexamer. Mg(2+) serves as cofactor.

It localises to the cytoplasm. The enzyme catalyses (R)-4'-phosphopantetheine + ATP + H(+) = 3'-dephospho-CoA + diphosphate. The protein operates within cofactor biosynthesis; coenzyme A biosynthesis; CoA from (R)-pantothenate: step 4/5. Functionally, reversibly transfers an adenylyl group from ATP to 4'-phosphopantetheine, yielding dephospho-CoA (dPCoA) and pyrophosphate. This chain is Phosphopantetheine adenylyltransferase, found in Pseudomonas putida (strain ATCC 700007 / DSM 6899 / JCM 31910 / BCRC 17059 / LMG 24140 / F1).